The chain runs to 1687 residues: Brefeldin A-inhibited guanine nucleotide-exchange protein 1 (1687 aa).

Residues 494 to 529 (SLENEAPANNHSNSNEEDGTTIDHDFHPDLNPESSD) form a disordered region. A compositionally biased stretch (basic and acidic residues) spans 514–523 (TIDHDFHPDL). In terms of domain architecture, SEC7 spans 532–719 (TLEQRRAYKI…GALYDQVVIN (188 aa)). The active site involves Glu-634. The disordered stretch occupies residues 1229–1248 (KGRSSSPSTPVTDDHSPSTQ). The span at 1232–1248 (SSSPSTPVTDDHSPSTQ) shows a compositional bias: polar residues.

In terms of assembly, homodimer.

Its subcellular location is the cytoplasm. It is found in the cytosol. It localises to the membrane. With respect to regulation, inhibited by brefeldin A. Activates the ARF proteins by exchanging bound GDP for free GTP. Plays a role in vesicular protein sorting. This Arabidopsis thaliana (Mouse-ear cress) protein is Brefeldin A-inhibited guanine nucleotide-exchange protein 1 (BIG1).